The chain runs to 508 residues: BTB/POZ domain-containing protein At3g03510 (508 aa).

The region spanning 11–77 (QDLDLYVKGV…CYGYKIELSA (67 aa)) is the BTB domain. Residues 156–414 (TRLLQDLITL…MQVLFVSQMQ (259 aa)) enclose the NPH3 domain. Tyr-355 carries the phosphotyrosine modification.

It belongs to the NPH3 family.

It participates in protein modification; protein ubiquitination. In terms of biological role, may act as a substrate-specific adapter of an E3 ubiquitin-protein ligase complex (CUL3-RBX1-BTB) which mediates the ubiquitination and subsequent proteasomal degradation of target proteins. In Arabidopsis thaliana (Mouse-ear cress), this protein is BTB/POZ domain-containing protein At3g03510.